The sequence spans 162 residues: Cyanate hydratase (162 aa).

Residues Arg-90, Glu-93, and Ser-116 contribute to the active site.

This sequence belongs to the cyanase family.

The catalysed reaction is cyanate + hydrogencarbonate + 3 H(+) = NH4(+) + 2 CO2. Catalyzes the reaction of cyanate with bicarbonate to produce ammonia and carbon dioxide. This chain is Cyanate hydratase, found in Populus trichocarpa (Western balsam poplar).